The primary structure comprises 380 residues: 1-deoxy-D-xylulose 5-phosphate reductoisomerase 2 (380 aa).

NADPH is bound by residues Ser10, Gly11, Ser12, Ile13, Gly36, Lys37, Asn38, and Asn120. Lys121 contacts 1-deoxy-D-xylulose 5-phosphate. Glu122 contributes to the NADPH binding site. Mn(2+) is bound at residue Asp146. 4 residues coordinate 1-deoxy-D-xylulose 5-phosphate: Ser147, Glu148, Ser172, and His195. Mn(2+) is bound at residue Glu148. Gly201 is a binding site for NADPH. The 1-deoxy-D-xylulose 5-phosphate site is built by Ser208, Asn213, Lys214, and Glu217. Glu217 provides a ligand contact to Mn(2+).

The protein belongs to the DXR family. Mg(2+) serves as cofactor. The cofactor is Mn(2+).

The catalysed reaction is 2-C-methyl-D-erythritol 4-phosphate + NADP(+) = 1-deoxy-D-xylulose 5-phosphate + NADPH + H(+). The protein operates within isoprenoid biosynthesis; isopentenyl diphosphate biosynthesis via DXP pathway; isopentenyl diphosphate from 1-deoxy-D-xylulose 5-phosphate: step 1/6. Functionally, catalyzes the NADPH-dependent rearrangement and reduction of 1-deoxy-D-xylulose-5-phosphate (DXP) to 2-C-methyl-D-erythritol 4-phosphate (MEP). The protein is 1-deoxy-D-xylulose 5-phosphate reductoisomerase 2 of Bacillus anthracis.